Here is a 299-residue protein sequence, read N- to C-terminus: Ficolin-3 (299 aa).

An N-terminal signal peptide occupies residues 1–23 (MDLLWILPSLWLLLLGGPACLKT). The interval 44-81 (PSCPGAPGSPGEKGAPGPQGPPGPPGKMGPKGEPGDPV) is disordered. The Collagen-like domain maps to 48-80 (GAPGSPGEKGAPGPQGPPGPPGKMGPKGEPGDP). A hydroxyproline mark is found at proline 50, proline 53, proline 59, proline 65, proline 68, and proline 77. Residues 61-70 (PQGPPGPPGK) show a composition bias toward pro residues. Residues 84–299 (LRCQEGPRNC…PYRRVRMMLR (216 aa)) enclose the Fibrinogen C-terminal domain. 2 disulfides stabilise this stretch: cysteine 86/cysteine 110 and cysteine 93/cysteine 121. Asparagine 189 is a glycosylation site (N-linked (GlcNAc...) (complex) asparagine). The Ca(2+) site is built by aspartate 237, aspartate 239, serine 241, and serine 243. Cysteine 245 and cysteine 258 are disulfide-bonded. 258–259 (CY) lines the a carbohydrate pocket.

Belongs to the ficolin lectin family. As to quaternary structure, homotrimer. May form an octadecamer consisting of an elementary trimer unit. Does not interact with fibronectin, elastin or zymosan. Interacts with MASP1 and MASP2. Post-translationally, the N-terminus is blocked. As to expression, liver and lung. In liver it is produced by bile duct epithelial cells and hepatocytes. In lung it is produced by both ciliated bronchial epithelial cells and type II alveolar epithelial cells.

The protein resides in the secreted. In terms of biological role, may function in innate immunity through activation of the lectin complement pathway. Calcium-dependent and GlcNAc-binding lectin. Has affinity with GalNAc, GlcNAc, D-fucose, as mono/oligosaccharide and lipopolysaccharides from S.typhimurium and S.minnesota. This is Ficolin-3 (FCN3) from Homo sapiens (Human).